The chain runs to 355 residues: N6-Methyl-AMP deaminase (355 aa).

Zn(2+) is bound by residues His24 and His26. N(6)-methyl-AMP contacts are provided by residues His26, Asn28, His74, Ser106 to Arg109, Asp148, and Gly181. His208 lines the Zn(2+) pocket. The N(6)-methyl-AMP site is built by Glu211, Asp293, and Asp294. Catalysis depends on Glu211, which acts as the Proton donor. Asp293 contributes to the Zn(2+) binding site.

Belongs to the metallo-dependent hydrolases superfamily. Adenosine and AMP deaminases family. As to quaternary structure, monomer. Zn(2+) serves as cofactor.

It catalyses the reaction N(6)-methyl-AMP + H2O + H(+) = IMP + methylamine. Functionally, catalyzes the hydrolysis of the free cytosolic methylated adenosine nucleotide N(6)-methyl-AMP (N6-mAMP) to produce inositol monophosphate (IMP) and methylamine. Is required for the catabolism of cytosolic N6-mAMP, which is derived from the degradation of mRNA containing N6-methylated adenine (m6A). Catalyzes the removal of different alkyl groups not only from N6-substituted purine or 2-aminopurine nucleoside monophosphates but also from O6-substituted compounds in vitro. This Homo sapiens (Human) protein is N6-Methyl-AMP deaminase.